A 207-amino-acid polypeptide reads, in one-letter code: MLNKLSRLLDEAGISLTDHQKNHLVAYVGMLDKWNKAYNLTSVRDPAEMIVRHILDSIVVAPYLQGQRFIDVGTGPGLPGIPLAIVLPDAHFTLLDSLGKRVRFLRQVQHELKLENITPVQSRVEAYPSEPPFDGVISRAFASLSDMVSWCRHLPGDKGRFYALKGQLPEDEIASLPNNFSVESVEKLRVPQLEGERHLVIIKSNKV.

Residues Gly73, Leu78, 124–125 (VE), and Arg139 contribute to the S-adenosyl-L-methionine site.

It belongs to the methyltransferase superfamily. RNA methyltransferase RsmG family.

Its subcellular location is the cytoplasm. The catalysed reaction is guanosine(527) in 16S rRNA + S-adenosyl-L-methionine = N(7)-methylguanosine(527) in 16S rRNA + S-adenosyl-L-homocysteine. Its function is as follows. Specifically methylates the N7 position of guanine in position 527 of 16S rRNA. The polypeptide is Ribosomal RNA small subunit methyltransferase G (Salmonella arizonae (strain ATCC BAA-731 / CDC346-86 / RSK2980)).